The primary structure comprises 768 residues: U-box domain-containing protein 45 (768 aa).

The 75-residue stretch at 278–352 folds into the U-box domain; the sequence is VPPEELRCPI…SSWCEQNGVQ (75 aa). 5 ARM repeats span residues 454 to 497, 500 to 540, 542 to 579, 581 to 620, and 623 to 662; these read EEAR…NLAV, NRNK…CLEE, KPVI…HLST, PPNI…NLVL, and AGKD…ILCN.

As to quaternary structure, binds to SD129.

The catalysed reaction is S-ubiquitinyl-[E2 ubiquitin-conjugating enzyme]-L-cysteine + [acceptor protein]-L-lysine = [E2 ubiquitin-conjugating enzyme]-L-cysteine + N(6)-ubiquitinyl-[acceptor protein]-L-lysine.. It participates in protein modification; protein ubiquitination. Functions as an E3 ubiquitin ligase. The polypeptide is U-box domain-containing protein 45 (PUB45) (Arabidopsis thaliana (Mouse-ear cress)).